Reading from the N-terminus, the 469-residue chain is Glutamate--tRNA ligase (469 aa).

Positions 12–22 (PSPTGFIHLGN) match the 'HIGH' region motif. The short motif at 244–248 (KMSKR) is the 'KMSKS' region element. Lys247 lines the ATP pocket.

It belongs to the class-I aminoacyl-tRNA synthetase family. Glutamate--tRNA ligase type 1 subfamily. In terms of assembly, monomer.

Its subcellular location is the cytoplasm. The enzyme catalyses tRNA(Glu) + L-glutamate + ATP = L-glutamyl-tRNA(Glu) + AMP + diphosphate. In terms of biological role, catalyzes the attachment of glutamate to tRNA(Glu) in a two-step reaction: glutamate is first activated by ATP to form Glu-AMP and then transferred to the acceptor end of tRNA(Glu). The polypeptide is Glutamate--tRNA ligase (Acidovorax sp. (strain JS42)).